The primary structure comprises 625 residues: Acetolactate synthase (625 aa).

Positions 1–29 are disordered; sequence MSAPTKPHARPQGAGNSVPNTVKPATQFP. Positions 14 to 29 are enriched in polar residues; the sequence is AGNSVPNTVKPATQFP. A thiamine diphosphate-binding site is contributed by Glu-92. FAD is bound by residues Arg-194, 300–321, and 343–362; these read HGTV…LGTR and DIDP…IVGD. The interval 436–516 is thiamine pyrophosphate binding; that stretch reads QHQMWAAQFI…IKVALINNGN (81 aa). Mg(2+) is bound by residues Asp-487 and Asn-514.

The protein belongs to the TPP enzyme family. It depends on Mg(2+) as a cofactor. Thiamine diphosphate serves as cofactor.

It carries out the reaction 2 pyruvate + H(+) = (2S)-2-acetolactate + CO2. It participates in amino-acid biosynthesis; L-isoleucine biosynthesis; L-isoleucine from 2-oxobutanoate: step 1/4. The protein operates within amino-acid biosynthesis; L-valine biosynthesis; L-valine from pyruvate: step 1/4. The sequence is that of Acetolactate synthase (ilvB) from Mycobacterium leprae (strain TN).